The chain runs to 446 residues: Exodeoxyribonuclease 7 large subunit (446 aa).

The protein belongs to the XseA family. As to quaternary structure, heterooligomer composed of large and small subunits.

The protein resides in the cytoplasm. The catalysed reaction is Exonucleolytic cleavage in either 5'- to 3'- or 3'- to 5'-direction to yield nucleoside 5'-phosphates.. Functionally, bidirectionally degrades single-stranded DNA into large acid-insoluble oligonucleotides, which are then degraded further into small acid-soluble oligonucleotides. The protein is Exodeoxyribonuclease 7 large subunit of Streptococcus pneumoniae (strain ATCC BAA-255 / R6).